A 378-amino-acid chain; its full sequence is Alginate lyase (378 aa).

The first 28 residues, 1 to 28, serve as a signal peptide directing secretion; the sequence is MQTPKLIRPTLLSMAIVSSMAWATGASA. Substrate contacts are provided by residues 67-68, 140-141, and Tyr258; these read SK and HT.

This sequence belongs to the polysaccharide lyase 5 family.

It localises to the periplasm. It carries out the reaction Eliminative cleavage of alginate to give oligosaccharides with 4-deoxy-alpha-L-erythro-hex-4-enuronosyl groups at their non-reducing ends and beta-D-mannuronate at their reducing end.. In terms of biological role, catalyzes the depolymerization of alginate by cleaving the beta-1,4 glycosidic bond between two adjacent sugar residues via a beta-elimination mechanism. May serve to degrade mislocalized alginate that is trapped in the periplasmic space. This chain is Alginate lyase, found in Pseudomonas syringae pv. tomato (strain ATCC BAA-871 / DC3000).